The following is a 785-amino-acid chain: Probable ATP-dependent RNA helicase ddx17 (785 aa).

4 stretches are compositionally biased toward low complexity: residues M1 to G11, S18 to S37, S49 to S95, and G105 to S177. Positions M1–S233 are disordered. Over residues K178–G191 the composition is skewed to polar residues. Over residues P192–S233 the composition is skewed to low complexity. The short motif at M384 to S412 is the Q motif element. In terms of domain architecture, Helicase ATP-binding spans W415 to V590. An ATP-binding site is contributed by A428–T435. A DEAD box motif is present at residues D538–D541. The Helicase C-terminal domain maps to N602–S763. Residues V764–K774 show a composition bias toward polar residues. The disordered stretch occupies residues V764–Y785.

This sequence belongs to the DEAD box helicase family. DDX5/DBP2 subfamily.

The protein localises to the cytoplasm. It is found in the nucleus. The enzyme catalyses ATP + H2O = ADP + phosphate + H(+). Probable ATP-dependent RNA helicase which may be involved nonsense-mediated mRNA decay and ribosome biogenesis through rRNA processing. This is Probable ATP-dependent RNA helicase ddx17 (ddx17) from Dictyostelium discoideum (Social amoeba).